The sequence spans 390 residues: Aspartate beta-hydroxylase domain-containing protein 1 (390 aa).

The interval 1–54 is disordered; that stretch reads MKEGRGSFSVERGPRKERETAQSGMWKGNSPAGSQGAAMEGTGGELGGQGNWGP. The Cytoplasmic segment spans residues 1–72; the sequence is MKEGRGSFSV…RASLIMLPWP (72 aa). The span at 41 to 51 shows a compositional bias: gly residues; sequence GTGGELGGQGN. Residues 73–95 traverse the membrane as a helical segment; that stretch reads LPLASSALTLLFGALTSLFLWYC. The Lumenal portion of the chain corresponds to 96–390; sequence YRLGSQDMQA…ALDFVFAPDP (295 aa). The interval 116 to 143 is disordered; the sequence is RGGPVGCSEAGGPSPGGPGDPGEGPRTE. Positions 128 to 137 are enriched in gly residues; that stretch reads PSPGGPGDPG. The residue at position 129 (Ser-129) is a Phosphoserine.

The protein belongs to the aspartyl/asparaginyl beta-hydroxylase family.

The protein resides in the membrane. In Homo sapiens (Human), this protein is Aspartate beta-hydroxylase domain-containing protein 1 (ASPHD1).